Reading from the N-terminus, the 163-residue chain is Secretory-abundant heat soluble protein 53582 (163 aa).

The first 19 residues, methionine 1–alanine 19, serve as a signal peptide directing secretion. Residues glutamate 22–proline 51 form an SAHS-c1 region. The interval tyrosine 67–glutamate 95 is SAHS-c2. An SAHS-c3 region spans residues lysine 108–arginine 157.

It belongs to the Secretory-abundant heat soluble protein (SAHS) family.

The protein resides in the secreted. Secreted heat soluble protein acting as a molecular shield in water-deficient condition. Tardigrade-specific intrinsically disordered proteins (TDPs) are essential for desiccation tolerance by forming non-crystalline amorphous solids upon desiccation, and this vitrified state mirrors their protective capabilities. This Hypsibius exemplaris (Freshwater tardigrade) protein is Secretory-abundant heat soluble protein 53582.